The chain runs to 433 residues: Zinc carboxypeptidase A 1 (433 aa).

The first 28 residues, 1–28 (MVRLNSAAGSRWWAPAMAILAVALSVEA), serve as a signal peptide directing secretion. The Peptidase M14 domain occupies 130 to 423 (DYHTLEEIHA…DSLITLLEES (294 aa)). 2 residues coordinate Zn(2+): His-187 and Glu-190. The cysteines at positions 253 and 276 are disulfide-linked. Residue His-312 participates in Zn(2+) binding. Residue Glu-387 is the Proton donor/acceptor of the active site.

Belongs to the peptidase M14 family. Zn(2+) serves as cofactor. In terms of tissue distribution, expressed in the posterior midgut in pupae and female adults.

The protein localises to the secreted. Its function is as follows. Involved in the digestion of the blood meal. The chain is Zinc carboxypeptidase A 1 from Anopheles gambiae (African malaria mosquito).